A 279-amino-acid chain; its full sequence is Energy-coupling factor transporter ATP-binding protein EcfA1 (279 aa).

An ABC transporter domain is found at 5 to 240 (IELKKVTFNY…GDELLQLGLD (236 aa)). 40-47 (GHNGSGKS) serves as a coordination point for ATP.

It belongs to the ABC transporter superfamily. Energy-coupling factor EcfA family. As to quaternary structure, forms a stable energy-coupling factor (ECF) transporter complex composed of 2 membrane-embedded substrate-binding proteins (S component), 2 ATP-binding proteins (A component) and 2 transmembrane proteins (T component).

The protein resides in the cell membrane. ATP-binding (A) component of a common energy-coupling factor (ECF) ABC-transporter complex. Unlike classic ABC transporters this ECF transporter provides the energy necessary to transport a number of different substrates. This is Energy-coupling factor transporter ATP-binding protein EcfA1 from Streptococcus pyogenes serotype M12 (strain MGAS2096).